Consider the following 420-residue polypeptide: Argininosuccinate synthase (420 aa).

A11–T19 serves as a coordination point for ATP. Y88 contributes to the L-citrulline binding site. Residue G118 participates in ATP binding. L-aspartate-binding residues include T120, N124, and D125. Residue N124 coordinates L-citrulline. Residues R128, S174, S183, E257, and Y269 each coordinate L-citrulline. The tract at residues K401–E420 is disordered. Positions S409 to E420 are enriched in basic and acidic residues.

This sequence belongs to the argininosuccinate synthase family. Type 1 subfamily. In terms of assembly, homotetramer.

It is found in the cytoplasm. It catalyses the reaction L-citrulline + L-aspartate + ATP = 2-(N(omega)-L-arginino)succinate + AMP + diphosphate + H(+). It functions in the pathway amino-acid biosynthesis; L-arginine biosynthesis; L-arginine from L-ornithine and carbamoyl phosphate: step 2/3. In Haloarcula marismortui (strain ATCC 43049 / DSM 3752 / JCM 8966 / VKM B-1809) (Halobacterium marismortui), this protein is Argininosuccinate synthase.